The chain runs to 152 residues: Em-like protein GEA1 (152 aa).

2 stretches are compositionally biased toward basic and acidic residues: residues 1 to 17 (MASK…KAKQ) and 32 to 63 (EAQE…IGHK). The interval 1–63 (MASKQLSREE…HEGYQEIGHK (63 aa)) is disordered. Repeat copies occupy residues 44–63 (GGQT…IGHK), 64–83 (GGEA…MGHK), 84–103 (GGEA…MGHK), and 104–123 (GGEA…MGRK). The tract at residues 44 to 123 (GGQTRKEQLG…HEGYKEMGRK (80 aa)) is 4 X 20 AA tandem repeats. The disordered stretch occupies residues 116-152 (GYKEMGRKGGLSTMEKSGGERAEEEGIEIDESKFTNK).

The protein belongs to the small hydrophilic plant seed protein family. In terms of tissue distribution, in seeds only. Specifically located to vascular bundles in the cotyledon and axis of the dry seed. Also found in the epiderm and outer layers of the cortex in the embryo axis.

Functionally, it is thought to provide protection for the cytoplasm during the desiccation stage of embryo development. The sequence is that of Em-like protein GEA1 (EM1) from Arabidopsis thaliana (Mouse-ear cress).